A 446-amino-acid polypeptide reads, in one-letter code: Protein dyf-7 (446 aa).

An N-terminal signal peptide occupies residues 1 to 24 (MNQLWRASCLQVLITFLLIHQNKA). Residues 35-295 (DCIADSFTVV…KTCYKKVSDS (261 aa)) form the ZP domain. An intrachain disulfide couples Cys-211 to Cys-273. Residues 377–397 (IPLIIMGSLASLLLFSAGAAI) traverse the membrane as a helical segment.

In terms of assembly, monomer under reducing conditions. Homodimer under non-reducing conditions. May also form higher order oligomers. In terms of processing, proteolytically cleaved and secreted in vitro. In the embryo, expressed in the excretory cell and, during dendrite formation, in the non-neuronal cells surrounding the sensory neurons, including hypodermal cells.

Its subcellular location is the cell membrane. It is found in the cell projection. The protein localises to the dendrite. The protein resides in the secreted. Required for permeability of amphid and phasmid neurons to external dyes, chemotaxis to ammonium chloride, avoidance of high osmotic stimuli, male mating and dauer formation. Along with dex-1, enables neurite growth and maintenance by anchoring amphid dendritic tips during neuron cell body migration in embryonic and larval development. This is Protein dyf-7 from Caenorhabditis elegans.